Consider the following 311-residue polypeptide: Catabolite control protein B (311 aa).

Residues methionine 1–arginine 56 form the HTH lacI-type domain. The segment at residues isoleucine 4–asparagine 23 is a DNA-binding region (H-T-H motif).

Seems to be complexed to phosphorylated HPr.

Transcriptional regulator involved in catabolite repression of several operons. The sequence is that of Catabolite control protein B (ccpB) from Bacillus subtilis (strain 168).